Consider the following 694-residue polypeptide: Acetolactate synthase catalytic subunit, mitochondrial (694 aa).

The N-terminal 42 residues, 1 to 42 (MLRSRQATNALRAVGQTRPLRSQTAVAFTQSLNKVPSNRRSE), are a transit peptide targeting the mitochondrion. The segment covering 45 to 58 (VATASSTASGAFNS) has biased composition (low complexity). The tract at residues 45-69 (VATASSTASGAFNSQVRPTPSPTFN) is disordered. Residues 59–69 (QVRPTPSPTFN) are compositionally biased toward polar residues. Residue E140 participates in thiamine diphosphate binding. FAD contacts are provided by residues R242, 358–379 (HGSA…LGGR), and 410–429 (EIMP…IVGD). The interval 505-585 (QHQMWTAQHF…VKVIVLNNEE (81 aa)) is thiamine pyrophosphate binding. Mg(2+) is bound by residues D556, N583, and E585.

The protein belongs to the TPP enzyme family. As to quaternary structure, homodimer. Requires Mg(2+) as cofactor. The cofactor is thiamine diphosphate.

It is found in the mitochondrion. It catalyses the reaction 2 pyruvate + H(+) = (2S)-2-acetolactate + CO2. It carries out the reaction 2-oxobutanoate + pyruvate + H(+) = (S)-2-ethyl-2-hydroxy-3-oxobutanoate + CO2. It participates in amino-acid biosynthesis; L-isoleucine biosynthesis; L-isoleucine from 2-oxobutanoate: step 1/4. Its pathway is amino-acid biosynthesis; L-valine biosynthesis; L-valine from pyruvate: step 1/4. Acetolactate synthase catalytic subunit, mitochondrial; part of the gene cluster that mediates the biosynthesis of chlorflavonin, a fungal flavonoid with acetolactate synthase inhibitory activity. Is not direcly involved in chlorflavonin biosynthesis but acts as a self-resistant protein that effectively confers chlorflavonin resistance to the native host. As a catalytic subunit of mitochondrial acetolactate synthase, catalyzes the first of a series of common steps in the biosynthesis of the branched-chain amino acids. Catalyzes the irreversible decarboxylation of pyruvate to a bound hydroxyethyl group that then condenses with either a second pyruvate molecule to form 2-acetolactate (AL) or with 2-ketobutyrate to form 2-aceto-2-hydroxybutyrate (AHB). The first product is the precursor for valine and leucine biosynthesis, while the second leads to isoleucine. The chain is Acetolactate synthase catalytic subunit, mitochondrial from Aspergillus candidus.